The following is a 347-amino-acid chain: Aspartate-semialdehyde dehydrogenase (347 aa).

NADP(+) contacts are provided by residues 13–16 and 41–42; these read TGAV and RS. A phosphate-binding site is contributed by R101. Residue C132 is the Acyl-thioester intermediate of the active site. A substrate-binding site is contributed by Q159. 162 to 163 is an NADP(+) binding site; sequence SG. K216 lines the phosphate pocket. R238 provides a ligand contact to substrate. The Proton acceptor role is filled by H245. Residue N319 coordinates NADP(+).

It belongs to the aspartate-semialdehyde dehydrogenase family. In terms of assembly, homodimer.

It carries out the reaction L-aspartate 4-semialdehyde + phosphate + NADP(+) = 4-phospho-L-aspartate + NADPH + H(+). It functions in the pathway amino-acid biosynthesis; L-lysine biosynthesis via DAP pathway; (S)-tetrahydrodipicolinate from L-aspartate: step 2/4. The protein operates within amino-acid biosynthesis; L-methionine biosynthesis via de novo pathway; L-homoserine from L-aspartate: step 2/3. Its pathway is amino-acid biosynthesis; L-threonine biosynthesis; L-threonine from L-aspartate: step 2/5. In terms of biological role, catalyzes the NADPH-dependent formation of L-aspartate-semialdehyde (L-ASA) by the reductive dephosphorylation of L-aspartyl-4-phosphate. This Legionella pneumophila protein is Aspartate-semialdehyde dehydrogenase.